A 750-amino-acid chain; its full sequence is Nibrin (750 aa).

One can recognise an FHA domain in the interval 24–83; the sequence is YIVGRKNCAILIENDQSISRNHAVLRVNFPVTSLSQTDEIPTLTIKDNSKYGTFINEEKM. BRCT domains are found at residues 105–181 and 224–315; these read KFRV…SEFL and GKTF…LAVI. The segment at 111 to 328 is mediates interaction with SP100; sequence EPLVVCSSCL…TESYCNPQGQ (218 aa). An interaction with MTOR, MAPKAP1 and RICTOR region spans residues 221-403; it reads IFKGKTFVFL…SRKLLQGTCN (183 aa). At T337 the chain carries Phosphothreonine. S343 is modified (phosphoserine; by ATM). 2 positions are modified to phosphoserine: S347 and S433. 2 disordered regions span residues 429-479 and 494-550; these read NYQL…SSCK and QPAG…RKRK. K436 is covalently cross-linked (Glycyl lysine isopeptide (Lys-Gly) (interchain with G-Cter in ubiquitin)). The span at 446–457 shows a compositional bias: polar residues; it reads WSSQQQLNSIKN. The Nuclear localization signal motif lies at 461-467; the sequence is PCSRKRE. Positions 502–514 are enriched in basic and acidic residues; that stretch reads KSKDHESQSETLD. Phosphoserine occurs at positions 508 and 517. K528 participates in a covalent cross-link: Glycyl lysine isopeptide (Lys-Gly) (interchain with G-Cter in SUMO2). The span at 540 to 550 shows a compositional bias: basic and acidic residues; it reads STEDLRARKRK. Residues K569 and K580 each participate in a glycyl lysine isopeptide (Lys-Gly) (interchain with G-Cter in SUMO2) cross-link. Residues 581–599 are compositionally biased toward basic and acidic residues; the sequence is QEADVSIRKKPRMDAERNQ. The tract at residues 581 to 622 is disordered; that stretch reads QEADVSIRKKPRMDAERNQHLNGGPVPESNSALQEDETGKKD. Residues K683, K687, and K732 each participate in a glycyl lysine isopeptide (Lys-Gly) (interchain with G-Cter in ubiquitin) cross-link. Positions 737–746 match the FxF/Y motif motif; the sequence is ADDLFRYNPN.

Belongs to the Nibrin family. As to quaternary structure, component of the MRN complex composed of two heterodimers RAD50 and MRE11 associated with a single NBN. The MRN complexes dimerize on DNA to form joined MRN-MRN oligomers required for DNA double-strand break repair. The MRN complexes dimerize on DNA to form joined MRN-MRN oligomers required for DNA double-strand break repair. As part of the MRN complex, interacts with MCM9; the interaction recruits the complex to DNA repair sites. Component of the BASC complex, at least composed of BRCA1, MSH2, MSH6, MLH1, ATM, BLM, RAD50, MRE11 and NBN. Interacts with histone H2AX; this requires phosphorylation of H2AX on 'Ser-139' and promotes NBN recruitment to DNA damage sites. Interacts with (phosphorylated) MDC1; promoting NBN recruitment to DNA damage sites. Interacts with (phosphorylated) RAD17; promoting NBN recruitment to DNA damage sites. Interacts (via FxF/Y motif) with ATM. Interacts with HJURP. Interacts with INTS3. Interacts with KPNA2. Interacts with TERF2; interaction is disrupted upon NBN phosphorylation by CDK2. Interacts with (phosphorylated) RBBP8/CtIP; the interaction links the role of the MRN complex in DNA double-strand break sensing to resection. Interacts with SP100; recruits NBN to PML bodies. Interacts with ATF2. Interacts with MTOR, MAPKAP1 isoform 2 and RICTOR; indicative for an association with the mTORC2 complex. Interacts with MRNIP. Interacts with UFL1; promoting UFL1 recruitment to double-strand breaks following DNA damage. Interacts with CYREN (via XLF motif). Phosphorylated by ATM in response of ionizing radiation, and such phosphorylation is responsible intra-S phase checkpoint control and telomere maintenance. Phosphorylated at Ser-433 by CDK2 in S/G2 phases abolishes interaction with TERF2, enabling DCLRE1B/Apollo recruitment to telomeres. Phosphorylation at Ser-433 in response to dysfunctional telomeres promotes non-homologous end joining repair at telomeres, while dephosphorylation by PPP1CA promotes microhomology-mediated end-joining (MMEJ) repair. Post-translationally, ubiquitinated at Lys-436 via 'Lys-6'-linked ubiquitin chains by RNF8, promoting NBN recruitment to DNA double-strand breaks (DSBs). Ubiquitinated at Lys-687 via 'Lys-63'-linked ubiquitin chains by PELI1: ubiquitination takes place following PELI1 phosphorylation and promotes ATM activation and DNA repair. Ubiquitinated at Lys-732 via 'Lys-63'-linked ubiquitin chains by the SCF(SKP2) complex: ubiquitination takes place following SKP2 phosphorylation and promotes ATM activation and DNA repair. As to expression, present at approximately equal levels in the heart at fetal day 17, at relatively constant levels at postnatal days 10, 17 and 21 and at slightly lower levels in the adult heart. Barely detectable in the brain. Not detected in kidney, very low levels in liver and skeletal muscle and moderate levels in heart, lung and brain (at protein level).

Its subcellular location is the nucleus. It localises to the chromosome. It is found in the PML body. The protein localises to the telomere. In terms of biological role, component of the MRN complex, which plays a central role in double-strand break (DSB) repair, DNA recombination, maintenance of telomere integrity and meiosis. The MRN complex is involved in the repair of DNA double-strand breaks (DSBs) via homologous recombination (HR), an error-free mechanism which primarily occurs during S and G2 phases. The complex (1) mediates the end resection of damaged DNA, which generates proper single-stranded DNA, a key initial steps in HR, and is (2) required for the recruitment of other repair factors and efficient activation of ATM and ATR upon DNA damage. The MRN complex possesses single-strand endonuclease activity and double-strand-specific 3'-5' exonuclease activity, which are provided by MRE11, to initiate end resection, which is required for single-strand invasion and recombination. Within the MRN complex, NBN acts as a protein-protein adapter, which specifically recognizes and binds phosphorylated proteins, promoting their recruitment to DNA damage sites. Recruits MRE11 and RAD50 components of the MRN complex to DSBs in response to DNA damage. Promotes the recruitment of PI3/PI4-kinase family members ATM, ATR, and probably DNA-PKcs to the DNA damage sites, activating their functions. Mediates the recruitment of phosphorylated RBBP8/CtIP to DSBs, leading to cooperation between the MRN complex and RBBP8/CtIP to initiate end resection. RBBP8/CtIP specifically promotes the endonuclease activity of the MRN complex to clear DNA ends containing protein adducts. The MRN complex is also required for the processing of R-loops. NBN also functions in telomere length maintenance via its interaction with TERF2: interaction with TERF2 during G1 phase preventing recruitment of DCLRE1B/Apollo to telomeres. NBN also promotes DNA repair choice at dysfunctional telomeres: NBN phosphorylation by CK2 promotes non-homologous end joining repair at telomeres, while unphosphorylated NBN promotes microhomology-mediated end-joining (MMEJ) repair. Enhances AKT1 phosphorylation possibly by association with the mTORC2 complex. The sequence is that of Nibrin (Nbn) from Rattus norvegicus (Rat).